A 266-amino-acid polypeptide reads, in one-letter code: Histidinol-phosphatase (266 aa).

Glutamate 69, aspartate 84, isoleucine 86, and aspartate 87 together coordinate Mg(2+). Glutamate 69 contributes to the substrate binding site. Substrate-binding positions include 86–89, arginine 190, and aspartate 218; that span reads IDGT. Position 218 (aspartate 218) interacts with Mg(2+).

The protein belongs to the inositol monophosphatase superfamily. Mg(2+) is required as a cofactor.

The enzyme catalyses L-histidinol phosphate + H2O = L-histidinol + phosphate. It functions in the pathway amino-acid biosynthesis; L-histidine biosynthesis; L-histidine from 5-phospho-alpha-D-ribose 1-diphosphate: step 8/9. Its function is as follows. Catalyzes the dephosphorylation of histidinol-phosphate to histidinol, the direct precursor of histidine. This chain is Histidinol-phosphatase, found in Streptomyces coelicolor (strain ATCC BAA-471 / A3(2) / M145).